A 735-amino-acid polypeptide reads, in one-letter code: 1,4-alpha-glucan branching enzyme GlgB 1 (735 aa).

Asp-418 serves as the catalytic Nucleophile. Glu-471 serves as the catalytic Proton donor.

The protein belongs to the glycosyl hydrolase 13 family. GlgB subfamily. As to quaternary structure, monomer.

It catalyses the reaction Transfers a segment of a (1-&gt;4)-alpha-D-glucan chain to a primary hydroxy group in a similar glucan chain.. The protein operates within glycan biosynthesis; glycogen biosynthesis. In terms of biological role, catalyzes the formation of the alpha-1,6-glucosidic linkages in glycogen by scission of a 1,4-alpha-linked oligosaccharide from growing alpha-1,4-glucan chains and the subsequent attachment of the oligosaccharide to the alpha-1,6 position. This is 1,4-alpha-glucan branching enzyme GlgB 1 from Rhizobium johnstonii (strain DSM 114642 / LMG 32736 / 3841) (Rhizobium leguminosarum bv. viciae).